A 709-amino-acid polypeptide reads, in one-letter code: Phosphoribosylformylglycinamidine synthase subunit PurL (709 aa).

Residue H36 is part of the active site. Y39 and K80 together coordinate ATP. E82 serves as a coordination point for Mg(2+). Residues 83–86 (SHNH) and R105 contribute to the substrate site. The active-site Proton acceptor is H84. Position 106 (D106) interacts with Mg(2+). A substrate-binding site is contributed by Q226. Position 252 (D252) interacts with Mg(2+). Position 294–296 (294–296 (ETQ)) interacts with substrate. ATP-binding residues include D470 and G507. S510 is a substrate binding site.

This sequence belongs to the FGAMS family. As to quaternary structure, monomer. Part of the FGAM synthase complex composed of 1 PurL, 1 PurQ and 2 PurS subunits.

The protein localises to the cytoplasm. The enzyme catalyses N(2)-formyl-N(1)-(5-phospho-beta-D-ribosyl)glycinamide + L-glutamine + ATP + H2O = 2-formamido-N(1)-(5-O-phospho-beta-D-ribosyl)acetamidine + L-glutamate + ADP + phosphate + H(+). It functions in the pathway purine metabolism; IMP biosynthesis via de novo pathway; 5-amino-1-(5-phospho-D-ribosyl)imidazole from N(2)-formyl-N(1)-(5-phospho-D-ribosyl)glycinamide: step 1/2. Its function is as follows. Part of the phosphoribosylformylglycinamidine synthase complex involved in the purines biosynthetic pathway. Catalyzes the ATP-dependent conversion of formylglycinamide ribonucleotide (FGAR) and glutamine to yield formylglycinamidine ribonucleotide (FGAM) and glutamate. The FGAM synthase complex is composed of three subunits. PurQ produces an ammonia molecule by converting glutamine to glutamate. PurL transfers the ammonia molecule to FGAR to form FGAM in an ATP-dependent manner. PurS interacts with PurQ and PurL and is thought to assist in the transfer of the ammonia molecule from PurQ to PurL. The protein is Phosphoribosylformylglycinamidine synthase subunit PurL of Saccharolobus islandicus (strain M.16.27) (Sulfolobus islandicus).